The chain runs to 91 residues: Progonadoliberin-1 (91 aa).

The first 21 residues, 1 to 21 (MVVKTWMPWLLVSSVLSQGCC), serve as a signal peptide directing secretion. The residue at position 22 (glutamine 22) is a Pyrrolidone carboxylic acid. Glycine 31 is subject to Glycine amide.

The protein belongs to the GnRH family. In terms of tissue distribution, expressed in the cell bodies of a cluster of neurons in the preoptic region.

The protein localises to the secreted. Its function is as follows. Stimulates the secretion of gonadotropins. The sequence is that of Progonadoliberin-1 (gnrh1) from Oryzias latipes (Japanese rice fish).